A 381-amino-acid chain; its full sequence is Cytochrome b (381 aa).

Helical transmembrane passes span 34-54, 78-99, 114-134, and 179-199; these read FGSL…FLAM, WLIR…YLHI, WNIG…GYVL, and FFAF…IHLL. Residues histidine 84 and histidine 98 each coordinate heme b. Heme b is bound by residues histidine 183 and histidine 197. Histidine 202 lines the a ubiquinone pocket. 4 consecutive transmembrane segments (helical) span residues 227–247, 289–309, 321–341, and 348–368; these read YKDL…ALFM, LGGV…PLLH, MTQI…WIGG, and FMMV…IIMP.

It belongs to the cytochrome b family. In terms of assembly, the cytochrome bc1 complex contains 3 respiratory subunits (MT-CYB, CYC1 and UQCRFS1), 2 core proteins (UQCRC1 and UQCRC2) and probably 6 low-molecular weight proteins. It depends on heme b as a cofactor.

Its subcellular location is the mitochondrion inner membrane. Component of the ubiquinol-cytochrome c reductase complex (complex III or cytochrome b-c1 complex) that is part of the mitochondrial respiratory chain. The b-c1 complex mediates electron transfer from ubiquinol to cytochrome c. Contributes to the generation of a proton gradient across the mitochondrial membrane that is then used for ATP synthesis. The chain is Cytochrome b (mt-cyb) from Prionace glauca (Blue shark).